Here is a 130-residue protein sequence, read N- to C-terminus: Small ribosomal subunit protein uS9 (130 aa).

The protein belongs to the universal ribosomal protein uS9 family.

The sequence is that of Small ribosomal subunit protein uS9 from Pseudomonas syringae pv. tomato (strain ATCC BAA-871 / DC3000).